The following is a 76-amino-acid chain: Vasotab-TY3 (76 aa).

Residues 1-21 (MKFALFSVLVLMLIATFVAAD) form the signal peptide. Residues 22–76 (DCPRICTSDYTPVCGTPSGGRRSANRTFANQCGLDSHNCLNKGDTYDKLHDGECK) form the Kazal-like domain. Cystine bridges form between C23/C60, C27/C53, and C35/C75.

Expressed by the salivary gland.

Its subcellular location is the secreted. In terms of biological role, vasodilator protein that inhibits vasoconstriction of isolated rat femoral artery induced by phenylephrine. Since platelet aggregation and vasoconstriction are key hemostatic responses, particularly in small wounds, this protein likely participates in the antihemostatic responses during blood feeding. Blocks L-type calcium channels (Cav1/CACNA1) in left ventricular myocytes isolated from rat hearts. The sequence is that of Vasotab-TY3 from Tabanus yao (Horsefly).